The sequence spans 180 residues: Endoribonuclease YbeY (180 aa).

Zn(2+)-binding residues include H118, H122, and H128.

It belongs to the endoribonuclease YbeY family. It depends on Zn(2+) as a cofactor.

The protein localises to the cytoplasm. In terms of biological role, single strand-specific metallo-endoribonuclease involved in late-stage 70S ribosome quality control and in maturation of the 3' terminus of the 16S rRNA. The protein is Endoribonuclease YbeY of Rhodococcus jostii (strain RHA1).